We begin with the raw amino-acid sequence, 480 residues long: MYQLLFQRLGVTLTAGNDKKTSIPSNQLVGHLIGLILLCDDLNEAFADFQALLQNGIAISSSDRGYLVFDAHVTDCGCHLRAQMIQDVFSYFKNHEVTKLYIFDAVAKKLNELKRHCISLIQTLCWENTSAQKLGFPKNIKSYEELLKLLQWDTADISSAIADSFPMNPNNADQNEKGLVWNVTKLEVVLEFLYCSHFLSKNKIYNKKENLDSVTIDFNNAFEKRQLLSNKFHCQGTGKLGVGCRYLKHAKQSKNSFISVVSNLQSRLALLSIAFLKSRCTLPCDIEALQKNSPRNVSAIPNFLHFLILEREWSQNETPILLAVRKLHEHEHCDLYFEARINPHTFEWTLQHKECCEFEHHTPYIVITALATGSSTTKTAQLLAWELMKAQKNFRQFWLTFMSQHRQYPFEIEHDEDQLLETQVSQDIFELYCQSKREDRNQILFDDSTSLLPKHIFTEYPSIFFNFQKNVCSKHGALVI.

It functions in the pathway siderophore biosynthesis. Functionally, probable cyclodipeptide synthase; part of the PUL gene cluster that mediates the formation of pulcherrimin, a red iron-containing pigment composed of two cyclized and modified leucine molecules that acts as a siderophore, a chelator that binds iron outside the cell for subsequent uptake. Two leucine molecules are cyclized via a cyclodipeptide synthase, and the resulting diketopiperazine is oxidized by a cytochrome P450 monooxygenase to generate pulcherriminic acid (PA), which can then spontaneously bind iron to form pulcherrimin. The probable cyclodipeptide synthase PUL1 and the cytochrome P450 monooxygenase PUL2 encode the enzymes responsible for the two-step pulcherrimin biosynthesis pathway. In Kluyveromyces lactis (strain ATCC 8585 / CBS 2359 / DSM 70799 / NBRC 1267 / NRRL Y-1140 / WM37) (Yeast), this protein is Probable cyclodipeptide synthase PUL1.